Here is a 166-residue protein sequence, read N- to C-terminus: uncharacterized protein (166 aa).

This is an uncharacterized protein from Bacillus subtilis (strain 168).